A 170-amino-acid chain; its full sequence is Peptide deformylase (170 aa).

C91 and H133 together coordinate Fe cation. Residue E134 is part of the active site. Residue H137 participates in Fe cation binding.

Belongs to the polypeptide deformylase family. It depends on Fe(2+) as a cofactor.

It carries out the reaction N-terminal N-formyl-L-methionyl-[peptide] + H2O = N-terminal L-methionyl-[peptide] + formate. Removes the formyl group from the N-terminal Met of newly synthesized proteins. Requires at least a dipeptide for an efficient rate of reaction. N-terminal L-methionine is a prerequisite for activity but the enzyme has broad specificity at other positions. The chain is Peptide deformylase from Histophilus somni (strain 129Pt) (Haemophilus somnus).